The sequence spans 290 residues: Nucleotide-binding protein LAR_0375 (290 aa).

An ATP-binding site is contributed by 13–20 (GMSGAGKT). A GTP-binding site is contributed by 63–66 (DMRS).

This sequence belongs to the RapZ-like family.

Functionally, displays ATPase and GTPase activities. In Limosilactobacillus reuteri subsp. reuteri (strain JCM 1112) (Lactobacillus reuteri), this protein is Nucleotide-binding protein LAR_0375.